A 129-amino-acid polypeptide reads, in one-letter code: Acetophenone carboxylase beta subunit (129 aa).

In terms of assembly, acetophenone carboxylase consists of five subunits; a heterooctameric subcomplex of two alpha (Apc1), two beta (Apc2), two gamma (Apc3) and two delta (Apc4) subunits assembles with the epsilon (Apc5) subunit in an unknown stoichiometry. It depends on Mg(2+) as a cofactor. Requires Mn(2+) as cofactor.

The protein localises to the cytoplasm. The enzyme catalyses acetophenone + hydrogencarbonate + 2 ATP + H2O = 3-oxo-3-phenylpropanoate + 2 ADP + 2 phosphate + 2 H(+). Its activity is regulated as follows. Inhibited by zinc ions, carbamoylphosphate and beta,gamma-imido-ATP. Catalyzes the carboxylation of acetophenone to form 3-oxo-3-phenylpropanoate (benzoylacetate) in the anaerobic catabolism of ethylbenzene. Also carboxylates propiophenone at the same rate and 4-acetyl-pyridine at lower rates. In Aromatoleum aromaticum (strain DSM 19018 / LMG 30748 / EbN1) (Azoarcus sp. (strain EbN1)), this protein is Acetophenone carboxylase beta subunit (apc2).